Reading from the N-terminus, the 439-residue chain is Glucose-6-phosphate 1-dehydrogenase (439 aa).

Residue lysine 100 coordinates NADP(+). Residues histidine 130, lysine 134, glutamate 168, and aspartate 187 each coordinate substrate. The active-site Proton acceptor is histidine 192. Substrate is bound at residue lysine 288.

This sequence belongs to the glucose-6-phosphate dehydrogenase family.

The enzyme catalyses D-glucose 6-phosphate + NADP(+) = 6-phospho-D-glucono-1,5-lactone + NADPH + H(+). It functions in the pathway carbohydrate degradation; pentose phosphate pathway; D-ribulose 5-phosphate from D-glucose 6-phosphate (oxidative stage): step 1/3. Functionally, catalyzes the oxidation of glucose 6-phosphate to 6-phosphogluconolactone. This is Glucose-6-phosphate 1-dehydrogenase from Chlamydia trachomatis serovar D (strain ATCC VR-885 / DSM 19411 / UW-3/Cx).